A 185-amino-acid chain; its full sequence is Large ribosomal subunit protein uL5m (185 aa).

Belongs to the universal ribosomal protein uL5 family. As to quaternary structure, component of the mitochondrial ribosome large subunit.

The protein resides in the mitochondrion. This chain is Large ribosomal subunit protein uL5m (RPL5), found in Arabidopsis thaliana (Mouse-ear cress).